The primary structure comprises 192 residues: Protein GrpE (192 aa).

The interval 1–43 (MSKEEFPHEKDLKDEVTPDKAPKKDPKAASKEEVKEDPAKDYE) is disordered.

The protein belongs to the GrpE family. In terms of assembly, homodimer.

It localises to the cytoplasm. In terms of biological role, participates actively in the response to hyperosmotic and heat shock by preventing the aggregation of stress-denatured proteins, in association with DnaK and GrpE. It is the nucleotide exchange factor for DnaK and may function as a thermosensor. Unfolded proteins bind initially to DnaJ; upon interaction with the DnaJ-bound protein, DnaK hydrolyzes its bound ATP, resulting in the formation of a stable complex. GrpE releases ADP from DnaK; ATP binding to DnaK triggers the release of the substrate protein, thus completing the reaction cycle. Several rounds of ATP-dependent interactions between DnaJ, DnaK and GrpE are required for fully efficient folding. The protein is Protein GrpE of Lactobacillus gasseri (strain ATCC 33323 / DSM 20243 / BCRC 14619 / CIP 102991 / JCM 1131 / KCTC 3163 / NCIMB 11718 / NCTC 13722 / AM63).